Consider the following 390-residue polypeptide: Leu/Ile/Val-binding protein homolog 6 (390 aa).

The first 21 residues, 1 to 21 (MKKIALTALAVFSLAASAAYA), serve as a signal peptide directing secretion.

This sequence belongs to the leucine-binding protein family.

In terms of biological role, component of an amino-acid transport system. The protein is Leu/Ile/Val-binding protein homolog 6 of Brucella melitensis biotype 1 (strain ATCC 23456 / CCUG 17765 / NCTC 10094 / 16M).